The sequence spans 473 residues: PEP-dependent dihydroxyacetone kinase, phosphoryl donor subunit DhaM (473 aa).

One can recognise a PTS EIIA type-4 domain in the interval 1-137 (MVNLVIVSHS…LAAKQAQLGI (137 aa)). The Tele-phosphohistidine intermediate role is filled by His9. One can recognise an HPr domain in the interval 155–242 (ARSVTVTIRN…SLAAEDFGEH (88 aa)). His169 acts as the Pros-phosphohistidine intermediate in catalysis. Residues 266–472 (PLPLAQPARH…IDPAAQRVSC (207 aa)) are PTS EI-like, N-terminal part. The active-site Tele-phosphohistidine intermediate is the His432.

Belongs to the PEP-utilizing enzyme family. Homodimer. The dihydroxyacetone kinase complex is composed of a homodimer of DhaM, a homodimer of DhaK and the subunit DhaL.

The catalysed reaction is dihydroxyacetone + phosphoenolpyruvate = dihydroxyacetone phosphate + pyruvate. In terms of biological role, component of the dihydroxyacetone kinase complex, which is responsible for the phosphoenolpyruvate (PEP)-dependent phosphorylation of dihydroxyacetone. DhaM serves as the phosphoryl donor. Is phosphorylated by phosphoenolpyruvate in an EI- and HPr-dependent reaction, and a phosphorelay system on histidine residues finally leads to phosphoryl transfer to DhaL and dihydroxyacetone. This chain is PEP-dependent dihydroxyacetone kinase, phosphoryl donor subunit DhaM, found in Pantoea ananatis (strain LMG 20103).